The following is a 972-amino-acid chain: MAGFRSLLVLLLVFPSGCVGFRSPLSVFKRFKETTRSFSNECLGTTRPVIPIDSSDFALDIRMPGVTPKQSDTYFCMSVRLPMDEEAFVIDFKPRASMDTVHHMLLFGCNMPASTGNYWFCDEGTCTDKANILYAWARNAPPTRLPKGVGFRVGGETGSKYFVLQVHYGDISAFRDNHKDCSGVSLHLTRLPQPLIAGMYLMMSVDTVIPPGGKVVNSDISCHYKKYPMHVFAYRVHTHHLGKVVSGYRVRNGQWTLIGRQSPQLPQAFYPVEHPVDVSFGDILAARCVFTGEGRTEVTHIGGTSSDEMCNLYIMYYMEAKHAVSFMTCTQNVAPDIFRTIPPEANIPIPVKSDMVMMHGHHKETENKDKTSLLQQPKREEEGVLEQGDFYSLLSKLLGEREDVVHVHKYNPTEKAESESDLVAEIANVVQKKDLGRSDTRESAEQERGNAILVRDRIHKFHRLVSTLRPAESRVLSLQQPLPGEGTWEPEHTGDFHVEEALDWPGVYLLPGQVSGVALDPQNNLVIFHRGDHVWDGNSFDSKFVYQQRGLGPIEEDTILVIDPNNAAVLQSSGKNLFYLPHGLSIDKDGNYWVTDVALHQVFKLDPKSKEGPLLTLGRSMQPGSDQNHFCQPTDVAVDPDTGTIYVSDGYCNSRLVQFSPSGKFITQWGEASLESSPKPGQFRVPHSLALVPPLGQLCVADRENGRIQCFKTDTKEFVREIKHPSFGRNVFAISYIPGLLFAVNGKPYFEDQEPVQGFVMNFSSGEIIDVFKPVRKHFDMPHDIAASEDGTVYVGDAHTNTVWKFTSTEKMEHRSVKKAGIEVQEIKESEAVVETKMENKPASSELQKIQEKQKLVKEPGSGVPAVLITTLLVIPVVVLLAIALFIRWKKSRAFGDSERKLEASSGRVLGRLRGKGGGGLNLGNFFASRKGYSRKGFDRLSTEGSDQEKDEDASESEEEYSAPPPAPAPSS.

Positions 1 to 20 (MAGFRSLLVLLLVFPSGCVG) are cleaved as a signal peptide. Residues 1–494 (MAGFRSLLVL…EGTWEPEHTG (494 aa)) are peptidylglycine alpha-hydroxylating monooxygenase. The propeptide occupies 21 to 30 (FRSPLSVFKR). Residues 31–873 (FKETTRSFSN…VPAVLITTLL (843 aa)) are Intragranular-facing. Intrachain disulfides connect cysteine 42-cysteine 181, cysteine 76-cysteine 121, cysteine 109-cysteine 126, cysteine 222-cysteine 329, and cysteine 288-cysteine 310. Residues histidine 102 and histidine 103 each coordinate Cu(2+). Residues histidine 167, histidine 237, histidine 239, and methionine 309 each contribute to the Cu(2+) site. The tract at residues 495–817 (DFHVEEALDW…STEKMEHRSV (323 aa)) is peptidyl-alpha-hydroxyglycine alpha-amidating lyase. 4 NHL repeats span residues 498-541 (VEEA…NSFD), 567-608 (AAVL…LDPK), 617-662 (LGRS…FSPS), and 670-714 (GEAS…FKTD). Valine 517 provides a ligand contact to Ca(2+). Arginine 530 lines the a protein pocket. Histidine 582 serves as a coordination point for Zn(2+). Position 584 (leucine 584) interacts with Ca(2+). A disulfide bridge links cysteine 631 with cysteine 652. Tyrosine 651 is a binding site for a protein. Histidine 687 is a binding site for Zn(2+). Cysteine 699 and cysteine 710 are oxidised to a cystine. Position 703 (arginine 703) interacts with a protein. N-linked (GlcNAc...) asparagine glycosylation is present at asparagine 762. One copy of the NHL 5 repeat lies at 766-809 (GEIIDVFKPVRKHFDMPHDIAASEDGTVYVGDAHTNTVWKFTST). Residue histidine 783 coordinates Zn(2+). Aspartate 784 contacts Ca(2+). A helical membrane pass occupies residues 874–897 (VIPVVVLLAIALFIRWKKSRAFGD). Residues 898 to 972 (SERKLEASSG…APPPAPAPSS (75 aa)) are Cytoplasmic-facing. Positions 925–942 (NFFASRKGYSRKGFDRLS) are interaction with RASSF9. Phosphoserine is present on residues serine 929 and serine 942. The disordered stretch occupies residues 937-972 (GFDRLSTEGSDQEKDEDASESEEEYSAPPPAPAPSS). Phosphothreonine is present on threonine 943. Serine 946 carries the post-translational modification Phosphoserine; by UHMK1. Acidic residues predominate over residues 949-961 (EKDEDASESEEEY). A Phosphoserine modification is found at serine 957. Pro residues predominate over residues 963–972 (APPPAPAPSS).

In the C-terminal section; belongs to the peptidyl-alpha-hydroxyglycine alpha-amidating lyase family. It in the N-terminal section; belongs to the copper type II ascorbate-dependent monooxygenase family. Monomer. Interacts with RASSF9. Zn(2+) serves as cofactor. Cu(2+) is required as a cofactor.

The protein resides in the cytoplasmic vesicle. The protein localises to the secretory vesicle membrane. It carries out the reaction a [peptide]-C-terminal glycine + 2 L-ascorbate + O2 = a [peptide]-C-terminal (2S)-2-hydroxyglycine + 2 monodehydro-L-ascorbate radical + H2O. The catalysed reaction is a [peptide]-C-terminal (2S)-2-hydroxyglycine = a [peptide]-C-terminal amide + glyoxylate. It catalyses the reaction N-dodecanoylglycine + 2 L-ascorbate + O2 = N-dodecanoyl-(2S)-hydroxyglycine + 2 monodehydro-L-ascorbate radical + H2O. The enzyme catalyses N-dodecanoyl-(2S)-hydroxyglycine = dodecanamide + glyoxylate. It carries out the reaction N-(9Z,12Z,15Z)-octadecatrienoylglycine + 2 L-ascorbate + O2 = N-(9Z,12Z,15Z)-octadecatrienoyl-(2S)-hydroxyglycine + 2 monodehydro-L-ascorbate radical + H2O. The catalysed reaction is N-(9Z,12Z,15Z)-octadecatrienoyl-(2S)-hydroxyglycine = (9Z,12Z,15Z)-octadecatrienamide + glyoxylate. It catalyses the reaction N-(9Z-octadecenoyl)glycine + 2 L-ascorbate + O2 = N-(9Z-octadecenoyl)-(2S)-hydroxyglycine + 2 monodehydro-L-ascorbate radical + H2O. The enzyme catalyses N-(9Z-octadecenoyl)-(2S)-hydroxyglycine = (9Z)-octadecenamide + glyoxylate. It carries out the reaction N-tetradecanoylglycine + 2 L-ascorbate + O2 = N-tetradecanoyl-(2S)-hydroxyglycine + 2 monodehydro-L-ascorbate radical + H2O. The catalysed reaction is N-tetradecanoyl-(2S)-hydroxyglycine = tetradecamide + glyoxylate. It catalyses the reaction N-decanoylglycine + 2 L-ascorbate + O2 = N-decanoyl-(2S)-hydroxyglycine + 2 monodehydro-L-ascorbate radical + H2O. The enzyme catalyses N-decanoyl-(2S)-hydroxyglycine = decanamide + glyoxylate. It carries out the reaction N-octanoylglycine + 2 L-ascorbate + O2 = N-octanoyl-(2S)-hydroxyglycine + 2 monodehydro-L-ascorbate radical + H2O. The catalysed reaction is N-octanoyl-(2S)-hydroxyglycine = octanamide + glyoxylate. With respect to regulation, PAM activity is inhibited by EDTA, phenylglyoxal and diethyl pyrocarbonate. PAL activity is stimulated by cadmium and inhibited by mercury. Functionally, bifunctional enzyme that catalyzes amidation of the C-terminus of proteins. Alpha-amidation is present at the C-terminus of many endocrine hormones and neuropeptides and is required for their activity. C-terminal amidation also takes place in response to protein fragmentation triggered by oxidative stress, promoting degradation of amidated protein fragments by the proteasome. Alpha-amidation involves two sequential reactions, both of which are catalyzed by separate catalytic domains of the enzyme. The first step, catalyzed by peptidyl alpha-hydroxylating monooxygenase (PHM) domain, is the copper-, ascorbate-, and O2- dependent stereospecific hydroxylation (with S stereochemistry) at the alpha-carbon (C-alpha) of the C-terminal glycine of the peptidylglycine substrate. The second step, catalyzed by the peptidylglycine amidoglycolate lyase (PAL) domain, is the zinc-dependent cleavage of the N-C-alpha bond, producing the alpha-amidated peptide and glyoxylate. Similarly, catalyzes the two-step conversion of an N-fatty acylglycine to a primary fatty acid amide and glyoxylate. The chain is Peptidyl-glycine alpha-amidating monooxygenase (PAM) from Bos taurus (Bovine).